A 150-amino-acid polypeptide reads, in one-letter code: Large ribosomal subunit protein uL13 (150 aa).

The segment at Glu130–Gln150 is disordered.

The protein belongs to the universal ribosomal protein uL13 family. In terms of assembly, part of the 50S ribosomal subunit.

Functionally, this protein is one of the early assembly proteins of the 50S ribosomal subunit, although it is not seen to bind rRNA by itself. It is important during the early stages of 50S assembly. The sequence is that of Large ribosomal subunit protein uL13 from Synechococcus sp. (strain CC9311).